The following is a 358-amino-acid chain: Ribosomal RNA large subunit methyltransferase M (358 aa).

S-adenosyl-L-methionine-binding positions include Ser191, 224–227, Asp243, Asp263, and Asp279; that span reads APGG. Catalysis depends on Lys308, which acts as the Proton acceptor.

This sequence belongs to the class I-like SAM-binding methyltransferase superfamily. RNA methyltransferase RlmE family. RlmM subfamily. In terms of assembly, monomer.

The protein resides in the cytoplasm. The catalysed reaction is cytidine(2498) in 23S rRNA + S-adenosyl-L-methionine = 2'-O-methylcytidine(2498) in 23S rRNA + S-adenosyl-L-homocysteine + H(+). Its function is as follows. Catalyzes the 2'-O-methylation at nucleotide C2498 in 23S rRNA. This is Ribosomal RNA large subunit methyltransferase M from Marinobacter nauticus (strain ATCC 700491 / DSM 11845 / VT8) (Marinobacter aquaeolei).